A 280-amino-acid polypeptide reads, in one-letter code: Phosphatidylglycerol--prolipoprotein diacylglyceryl transferase (280 aa).

The next 4 helical transmembrane spans lie at 30–50 (WYGLAYVAGILLGWLYARRII), 71–91 (FLLWAAGGIVLGGRIGYILFY), 106–126 (IWNGGMSFHGGLLGTTLAIII), and 132–152 (AIPLWSLFDVVAAVVPIGLFF). Residue Arg154 coordinates a 1,2-diacyl-sn-glycero-3-phospho-(1'-sn-glycerol). The next 3 membrane-spanning stretches (helical) occupy residues 188–208 (QLYEAALEGIVLLVVLAWFVY), 217–237 (GLVTGIFVCGYAASRIFVEFF), and 251–271 (WLTMGMVLSLPMALVGIWAIA).

Belongs to the Lgt family.

The protein localises to the cell inner membrane. The catalysed reaction is L-cysteinyl-[prolipoprotein] + a 1,2-diacyl-sn-glycero-3-phospho-(1'-sn-glycerol) = an S-1,2-diacyl-sn-glyceryl-L-cysteinyl-[prolipoprotein] + sn-glycerol 1-phosphate + H(+). Its pathway is protein modification; lipoprotein biosynthesis (diacylglyceryl transfer). Its function is as follows. Catalyzes the transfer of the diacylglyceryl group from phosphatidylglycerol to the sulfhydryl group of the N-terminal cysteine of a prolipoprotein, the first step in the formation of mature lipoproteins. The sequence is that of Phosphatidylglycerol--prolipoprotein diacylglyceryl transferase from Rhizobium meliloti (strain 1021) (Ensifer meliloti).